The chain runs to 131 residues: Small ribosomal subunit protein uS11 (131 aa).

Belongs to the universal ribosomal protein uS11 family. In terms of assembly, part of the 30S ribosomal subunit. Interacts with proteins S7 and S18. Binds to IF-3.

In terms of biological role, located on the platform of the 30S subunit, it bridges several disparate RNA helices of the 16S rRNA. Forms part of the Shine-Dalgarno cleft in the 70S ribosome. The polypeptide is Small ribosomal subunit protein uS11 (Thermotoga neapolitana (strain ATCC 49049 / DSM 4359 / NBRC 107923 / NS-E)).